The primary structure comprises 612 residues: Cytoplasmic dynein 1 intermediate chain 2 (612 aa).

2 stretches are compositionally biased toward basic and acidic residues: residues 1 to 13 (MSDK…ELER) and 20 to 43 (QIRE…KKEA). Residues 1-188 (MSDKSDLKAE…PHELTEEEKQ (188 aa)) form a disordered region. Position 2 is an N-acetylserine (serine 2). Position 51 is a diphosphoserine (serine 51). Phosphoserine is present on residues serine 51 and serine 84. Residues 82 to 91 (PSSKSVSTPS) are compositionally biased toward low complexity. Threonine 89 bears the Phosphothreonine mark. Serine 91, serine 95, and serine 98 each carry phosphoserine. Residues 164–188 (EKTLKKDEENDSKAPPHELTEEEKQ) are compositionally biased toward basic and acidic residues. WD repeat units follow at residues 251-300 (SKHR…TTPE), 304-344 (HCQS…RTPV), 353-394 (AHTH…HPQD), 403-443 (SKAV…AGIS), 448-493 (GHQG…PLYS), 496-536 (DNSD…EVPT), and 542-581 (EGNP…AVPR).

This sequence belongs to the dynein intermediate chain family. As to quaternary structure, homodimer. The cytoplasmic dynein 1 complex consists of two catalytic heavy chains (HCs) and a number of non-catalytic subunits presented by intermediate chains (ICs), light intermediate chains (LICs) and light chains (LCs); the composition seems to vary in respect to the IC, LIC and LC composition. The heavy chain homodimer serves as a scaffold for the probable homodimeric assembly of the respective non-catalytic subunits. The ICs and LICs bind directly to the HC dimer and the LCs assemble on the IC dimer. Interacts with DYNLT3. Interacts with DYNLT1. Interacts (dephosphorylated at Ser-84) with DCTN1. Interacts with BICD2. Interacts with SPEF2. Interacts with CFAP61. The phosphorylation status of Ser-84 appears to be involved in dynactin-dependent target binding. In terms of processing, pyrophosphorylation by 5-diphosphoinositol pentakisphosphate (5-IP7) promotes interaction with DCTN1. Serine pyrophosphorylation is achieved by Mg(2+)-dependent, but enzyme independent transfer of a beta-phosphate from a inositol pyrophosphate to a pre-phosphorylated serine residue.

The protein localises to the cytoplasm. It localises to the cytoskeleton. Acts as one of several non-catalytic accessory components of the cytoplasmic dynein 1 complex that are thought to be involved in linking dynein to cargos and to adapter proteins that regulate dynein function. Cytoplasmic dynein 1 acts as a motor for the intracellular retrograde motility of vesicles and organelles along microtubules. The intermediate chains mediate the binding of dynein to dynactin via its 150 kDa component (p150-glued) DCTN1. Involved in membrane-transport, such as Golgi apparatus, late endosomes and lysosomes. The sequence is that of Cytoplasmic dynein 1 intermediate chain 2 (Dync1i2) from Mus musculus (Mouse).